A 51-amino-acid chain; its full sequence is Large ribosomal subunit protein bL33 (51 aa).

Residues 1–23 (MREKIKLESSAGTGHFYTTTKNK) form a disordered region. The segment covering 10–20 (SAGTGHFYTTT) has biased composition (polar residues).

Belongs to the bacterial ribosomal protein bL33 family.

This Methylobacillus flagellatus (strain ATCC 51484 / DSM 6875 / VKM B-1610 / KT) protein is Large ribosomal subunit protein bL33.